The primary structure comprises 278 residues: Envelope glycoprotein L (278 aa).

The first 32 residues, 1–32 (MCRRPDCGFSFSPGPVILLWCCLLLSIVSSAA), serve as a signal peptide directing secretion. Positions 43–256 (VPAECPELTR…DKYYAGLPPE (214 aa)) constitute a gL betaherpesvirus-type domain. A disulfide bridge links Cys-154 with Cys-159.

It belongs to the herpesviridae glycoprotein L (gL) family. Betaherpesvirinae gL subfamily. As to quaternary structure, interacts with glycoprotein H (gH); this interaction is necessary for the correct processing and cell surface expression of gH. Forms the envelope pentamer complex (PC) composed of gH, gL, UL128, UL130, and UL131A. The pentamer interacts with host NRP2. Forms the envelope trimer complex composed of gH, gL, and gO. The trimer interacts with host PDGFRA. The trimer also interacts with host EPHA2.

It is found in the virion membrane. The protein localises to the host cell membrane. The protein resides in the host Golgi apparatus. It localises to the host trans-Golgi network. The heterodimer glycoprotein H-glycoprotein L is required for the fusion of viral and plasma membranes leading to virus entry into the host cell. Acts as a functional inhibitor of gH and maintains gH in an inhibited form. Upon binding to host integrins, gL dissociates from gH leading to activation of the viral fusion glycoproteins gB and gH. In human cytomegalovirus, forms two distincts complexes to mediate viral entry, a trimer and a pentamer at the surface of the virion envelope. The gH-gL-gO trimer is required for infection in fibroblasts by interacting with host PDGFRA, and in glioblastoma cells by interacting with host EPHA2. The gH-gL-UL128-UL130-UL131A pentamer is essential for viral entry in epithelial, endothelial and myeloid cells via interaction with host NRP2. In Human cytomegalovirus (strain 119) (HHV-5), this protein is Envelope glycoprotein L.